Here is a 141-residue protein sequence, read N- to C-terminus: MPTISQLVTTSRQDKNYKSKSPALHYGFNSLKKEDSEYNSPQKRGVCTRVTTMTPKKPNSALRKYARVRLSNGTEVTAYIPGVGHSLQEHSVVLVRGGRVKDLPGVRYHIVRGALDATGVANRMQGRSKYGAKRPKAAKKK.

Residues 1-11 show a composition bias toward polar residues; that stretch reads MPTISQLVTTS. The segment at 1–22 is disordered; that stretch reads MPTISQLVTTSRQDKNYKSKSP. Asp-102 is modified (3-methylthioaspartic acid).

It belongs to the universal ribosomal protein uS12 family. As to quaternary structure, part of the 30S ribosomal subunit. Contacts proteins S8 and S17. May interact with IF1 in the 30S initiation complex.

Functionally, with S4 and S5 plays an important role in translational accuracy. Interacts with and stabilizes bases of the 16S rRNA that are involved in tRNA selection in the A site and with the mRNA backbone. Located at the interface of the 30S and 50S subunits, it traverses the body of the 30S subunit contacting proteins on the other side and probably holding the rRNA structure together. The combined cluster of proteins S8, S12 and S17 appears to hold together the shoulder and platform of the 30S subunit. The sequence is that of Small ribosomal subunit protein uS12 from Acholeplasma laidlawii (strain PG-8A).